Here is a 234-residue protein sequence, read N- to C-terminus: MSTHIEAQQGDIAETVLLPGDPLRAKYIAETFLTDVHRYNTIRNAFGYTGYYKGQAISVQASGMGIPSISIYANELIQFYGVKRLIRVGTCGGLGTDVHVRDVMIAQSASTDSAIIQNTFGAGLYYAPTADFKLLMKAYQAAQQAQIAVKVGNILSEDRFYNDEIDRQKLIQYGVLGSEMEAAALYMLAAKFNVQALAVLTISNHIITGEETSAEEREKSFNEMITVALEAGIA.

H4 provides a ligand contact to a purine D-ribonucleoside. Phosphate-binding positions include G20, R24, R43, and 87 to 90 (RVGT). Residues 179 to 181 (EME) and 203 to 204 (SN) contribute to the a purine D-ribonucleoside site.

This sequence belongs to the PNP/UDP phosphorylase family. In terms of assembly, homohexamer; trimer of homodimers.

The catalysed reaction is a purine D-ribonucleoside + phosphate = a purine nucleobase + alpha-D-ribose 1-phosphate. The enzyme catalyses a purine 2'-deoxy-D-ribonucleoside + phosphate = a purine nucleobase + 2-deoxy-alpha-D-ribose 1-phosphate. Catalyzes the reversible phosphorolytic breakdown of the N-glycosidic bond in the beta-(deoxy)ribonucleoside molecules, with the formation of the corresponding free purine bases and pentose-1-phosphate. This chain is Purine nucleoside phosphorylase DeoD-type, found in Latilactobacillus sakei subsp. sakei (strain 23K) (Lactobacillus sakei subsp. sakei).